The chain runs to 85 residues: Large ribosomal subunit protein bL31B (85 aa).

It belongs to the bacterial ribosomal protein bL31 family. Type B subfamily. As to quaternary structure, part of the 50S ribosomal subunit.

This Clavibacter sepedonicus (Clavibacter michiganensis subsp. sepedonicus) protein is Large ribosomal subunit protein bL31B.